A 412-amino-acid chain; its full sequence is MASIAPSLKRAHAPLRKALTASSTIRAFATVPPTSSETTKPKRKSYFKDTTVAEFSDFLATSSPAQPLSPAEAFTLRTAEVGPEGKKRTITRLPEWLKTPIPAGNDNFKSIKKDLRGLGLHTVCEEARCPNISECWGGSDKNAATATIMLMGDTCTRGCRFCSVKTNRKPAALDPHEPENTAEALARWGLGYVVLTSVDRDDLADGGAHHFAETIRRIKQKKPSLLVEALTGDFRGDLDMVKVVAESGLDVYAHNVETVEDLTPYVRDRRATFRQSLSVLKHVKEVKGKEGIITKTSLMLGLGEQEHEVMAALEDLRKADVDVVTFGQYMRPTKRHLKVEKYVTPDEFEMWNKRALDMGFLYCASGPLVRSSYKAGEAFIENVLRKRSGEKAMARGTLAKAVALDSETRSSI.

Residues 1 to 28 (MASIAPSLKRAHAPLRKALTASSTIRAF) constitute a mitochondrion transit peptide. Positions 124, 129, 135, 155, 159, 162, and 372 each coordinate [4Fe-4S] cluster. The Radical SAM core domain occupies 138–361 (GSDKNAATAT…NKRALDMGFL (224 aa)).

Belongs to the radical SAM superfamily. Lipoyl synthase family. Requires [4Fe-4S] cluster as cofactor.

Its subcellular location is the mitochondrion. It carries out the reaction [[Fe-S] cluster scaffold protein carrying a second [4Fe-4S](2+) cluster] + N(6)-octanoyl-L-lysyl-[protein] + 2 oxidized [2Fe-2S]-[ferredoxin] + 2 S-adenosyl-L-methionine + 4 H(+) = [[Fe-S] cluster scaffold protein] + N(6)-[(R)-dihydrolipoyl]-L-lysyl-[protein] + 4 Fe(3+) + 2 hydrogen sulfide + 2 5'-deoxyadenosine + 2 L-methionine + 2 reduced [2Fe-2S]-[ferredoxin]. The protein operates within protein modification; protein lipoylation via endogenous pathway; protein N(6)-(lipoyl)lysine from octanoyl-[acyl-carrier-protein]: step 2/2. Catalyzes the radical-mediated insertion of two sulfur atoms into the C-6 and C-8 positions of the octanoyl moiety bound to the lipoyl domains of lipoate-dependent enzymes, thereby converting the octanoylated domains into lipoylated derivatives. The sequence is that of Lipoyl synthase, mitochondrial from Fusarium vanettenii (strain ATCC MYA-4622 / CBS 123669 / FGSC 9596 / NRRL 45880 / 77-13-4) (Fusarium solani subsp. pisi).